The following is a 374-amino-acid chain: Tryptophan--tRNA ligase (374 aa).

The short motif at 71–79 is the 'HIGH' region element; that stretch reads PSGRMHLGH. The 'KMSKS' region signature appears at 247–251; the sequence is KMSSS.

The protein belongs to the class-I aminoacyl-tRNA synthetase family.

It is found in the cytoplasm. The enzyme catalyses tRNA(Trp) + L-tryptophan + ATP = L-tryptophyl-tRNA(Trp) + AMP + diphosphate + H(+). In Methanopyrus kandleri (strain AV19 / DSM 6324 / JCM 9639 / NBRC 100938), this protein is Tryptophan--tRNA ligase.